Here is a 515-residue protein sequence, read N- to C-terminus: Ribosome assembly protein 4 (515 aa).

An interaction with MDN1 region spans residues 20–128; that stretch reads REVAIIPKDL…LLYTPRAVFK (109 aa). The segment at 29 to 125 is ubiquitin-like (UBL) domain; the sequence is LPNVSIKFQA…QITLLYTPRA (97 aa). 8 WD repeats span residues 141-181, 184-223, 227-273, 276-314, 352-396, 400-439, 442-481, and 484-515; these read GHGS…PMHT, GHYNWVLCVSWSPDGEVIATGSMDNTIRLWDPKSGQCLGD, GHSK…CQYT, GHTNSVSCVKWGGQGLLYSGSHDRTVRVWDINSQGRCIN, AQKK…KPIA, GHQKLVNHVAFSPDGRYIVSASFDNSIKLWDGRDGKFIST, GHVASVYQVAWSSDCRLLVSCSKDTTLKVWDVRTRKLSVD, and GHKDEVYTVDWSVDGKRVCSGGKDKMVRLWTH.

Belongs to the NLE1/RSA4 family. Associates with the pre-60S ribosomal particle. Interacts (via WD repeats) with uL18 (RPL5). Interacts (via UBL domain) with MDN1 (via VWFA/MIDAS domain). Interacts (via WD repeats) with NSA2.

Its subcellular location is the nucleus. It localises to the nucleolus. In terms of biological role, involved in ribosome biogenesis. Required for processing and efficient intra-nuclear transport of pre-60S ribosomal subunits. Interacts with the AAA-ATPase Midasin (MDN1/REA1), which is essential for the ATP-dependent dissociation of a group of nonribosomal factors from the pre-60S particle. This Saccharomyces cerevisiae (strain ATCC 204508 / S288c) (Baker's yeast) protein is Ribosome assembly protein 4.